The chain runs to 155 residues: Ribosomal RNA large subunit methyltransferase H (155 aa).

S-adenosyl-L-methionine is bound by residues Gly-104 and 123 to 128 (LSRLTL).

Belongs to the RNA methyltransferase RlmH family. As to quaternary structure, homodimer.

It localises to the cytoplasm. The enzyme catalyses pseudouridine(1915) in 23S rRNA + S-adenosyl-L-methionine = N(3)-methylpseudouridine(1915) in 23S rRNA + S-adenosyl-L-homocysteine + H(+). Specifically methylates the pseudouridine at position 1915 (m3Psi1915) in 23S rRNA. This Marinomonas sp. (strain MWYL1) protein is Ribosomal RNA large subunit methyltransferase H.